We begin with the raw amino-acid sequence, 1105 residues long: Pheromone-regulated membrane protein 10 (1105 aa).

Polar residues predominate over residues 1 to 11 (MSDNRPTYDTS). Disordered regions lie at residues 1–22 (MSDN…NHFH), 36–55 (RKQN…TASN), 65–123 (GSNH…FYGD), 151–278 (IKPK…GGGL), 385–473 (AGAS…FLRG), and 520–656 (EQKS…LRHK). The span at 67-82 (NHKFGNSINNNNNNAN) shows a compositional bias: low complexity. Polar residues predominate over residues 85–106 (LGSSSAGTNRRSLISPTSSTHV). The span at 162–178 (DSSDDDGNNLDEVEDET) shows a compositional bias: acidic residues. Residues 185–197 (LNQNHPPQQYYET) are compositionally biased toward polar residues. Acidic residues predominate over residues 198-210 (DSSDEDEEDDDEV). The span at 390–413 (LDHSQQSSAAPSTEITPSQSPNQH) shows a compositional bias: polar residues. A compositionally biased stretch (low complexity) spans 417–439 (EKSNNNENNQQSTTVESSSSTSS). A compositionally biased stretch (basic and acidic residues) spans 446–459 (LARRRASEERKKAE). 3 stretches are compositionally biased toward polar residues: residues 520-539 (EQKS…GTAL), 592-606 (RTNT…NSEE), and 624-633 (MNANLPSFQN). Helical transmembrane passes span 782 to 802 (PPWL…PFAF), 809 to 829 (LPIS…VSSI), 835 to 855 (SVFE…IGSI), 860 to 880 (LFCF…GYII), 903 to 923 (VIYS…YGWI), 938 to 958 (AIDE…LGLI), 963 to 983 (WSQV…SFFA), 986 to 1006 (HFST…GVLG), 1015 to 1035 (GMAV…GIAS), and 1075 to 1095 (VEVS…IYPF).

This sequence belongs to the ThrE exporter (TC 2.A.79) family.

The protein resides in the membrane. In Candida albicans (strain SC5314 / ATCC MYA-2876) (Yeast), this protein is Pheromone-regulated membrane protein 10 (PRM10).